The chain runs to 739 residues: MICOS complex subunit Mic60 (739 aa).

Residues 23–63 (ANNRQFGGSSSGSGGREQGRRQQEEQGQQGDQGYQGYQSLP) form a disordered region. The span at 47–61 (EQGQQGDQGYQGYQS) shows a compositional bias: low complexity. The chain crosses the membrane as a helical span at residues 69-89 (AGFGKVVLFVSPLAAVGGVIT). The disordered stretch occupies residues 154 to 219 (VTGLFGGGSG…PAAKPKDNPL (66 aa)). Over residues 163 to 198 (GDDKSKKSKVEPVKATPAEEKRPSKPSEVSKTEAKP) the composition is skewed to basic and acidic residues. A compositionally biased stretch (low complexity) spans 199–212 (VSKPAAAAAPAPAA). Positions 283–339 (TAVATAERAAREAQEKIVACEIALSAAATAQNAKKVEAVRDKIKKLVDHIGNVKDEL) form a coiled coil.

The protein belongs to the MICOS complex subunit Mic60 family. Component of the mitochondrial contact site and cristae organizing system (MICOS) complex. Interacts with the mitochondria-shaping protein Opa1.

It localises to the mitochondrion inner membrane. Functionally, component of the MICOS complex, a large protein complex of the mitochondrial inner membrane that plays crucial roles in the maintenance of crista junctions, inner membrane architecture, and formation of contact sites to the outer membrane. The protein is MICOS complex subunit Mic60 of Drosophila melanogaster (Fruit fly).